Reading from the N-terminus, the 359-residue chain is Peroxisome assembly protein 12 (359 aa).

Residues 1 to 19 (MAEHGAHITTASVADDQPS) lie on the Peroxisomal matrix side of the membrane. A helical transmembrane segment spans residues 20–47 (IFEVVAQDSLMTAVRPALQHVVKVLAES). Residues 48-51 (NPAH) lie on the Cytoplasmic side of the membrane. A helical membrane pass occupies residues 52–76 (YGFFWRWFDEIFTLLDFLLQQHYLS). Residues 77 to 109 (RTSASFSEHFYGLKRIVAGSSPQLQRPASAGLP) are Peroxisomal matrix-facing. Residues 110–139 (KEHLWKSAMFLVLLPYLKVKLEKLASTLRE) form a helical membrane-spanning segment. The Cytoplasmic portion of the chain corresponds to 140–144 (EDEYS). Residues 145–183 (IHPPSSHWKRFYRVFLAAYPFVTMTWEGWFLTQQLRYIL) traverse the membrane as a helical segment. At 184 to 249 (GKAEHHSPLL…VGGVALSLST (66 aa)) the chain is on the peroxisomal matrix side. Residues 250–277 (GLSVGVFFLQFLDWWYSSENQETIKSLT) form a helical membrane-spanning segment. Residues 278 to 359 (ALPTPPPPVH…HLIKLYSPEN (82 aa)) lie on the Cytoplasmic side of the membrane. 4 residues coordinate Zn(2+): C304, C307, C325, and C328. Residues 304 to 343 (CPLCRKARVNDTVLATSGYVFCYRCVFNYVRSHQACPITG) form an RING-type; degenerate zinc finger.

Belongs to the pex2/pex10/pex12 family. Component of the PEX2-PEX10-PEX12 retrotranslocation channel, composed of PEX2, PEX10 and PEX12. Interacts with PEX19 via its cytoplasmic domain.

Its subcellular location is the peroxisome membrane. The protein operates within protein modification; protein ubiquitination. Its function is as follows. Component of a retrotranslocation channel required for peroxisome organization by mediating export of the PEX5 receptor from peroxisomes to the cytosol, thereby promoting PEX5 recycling. The retrotranslocation channel is composed of PEX2, PEX10 and PEX12; each subunit contributing transmembrane segments that coassemble into an open channel that specifically allows the passage of PEX5 through the peroxisomal membrane. PEX12 also regulates PEX5 recycling by activating the E3 ubiquitin-protein ligase activity of PEX10. When PEX5 recycling is compromised, PEX12 stimulates PEX10-mediated polyubiquitination of PEX5, leading to its subsequent degradation. This Rattus norvegicus (Rat) protein is Peroxisome assembly protein 12 (Pex12).